The sequence spans 304 residues: MNPLCSEFTSSSRKAPEAAIGQVLIEALPYIRKFEGKTFVIKYGGSAMKDELLKNSFAQNVTLLRKVGINVVLVHGGGDAITRTAEKLGLVSQFVHGKRVTDNDMITVVQMTLAGKVNQDIVRLLSEHGGKAVGVTGLDADTIKAVPGPNAEKLGLVGDVESINTDYIDLLCRAGLIPVIAPVGYDHNGNIYNINADDAASSIAIALKAEKLIYVSDVEGIQVGERILKTICKAEAADFIEQGIISGGMIPKVLSAFKTLDGGVRKIHLIDGKFTHSLLLEIFTHEGIGTQFIAEQDNDQQENR.

Residues 77 to 78 (GG), Arg99, and Asn193 contribute to the substrate site.

It belongs to the acetylglutamate kinase family. ArgB subfamily.

The protein localises to the cytoplasm. The enzyme catalyses N-acetyl-L-glutamate + ATP = N-acetyl-L-glutamyl 5-phosphate + ADP. Its pathway is amino-acid biosynthesis; L-arginine biosynthesis; N(2)-acetyl-L-ornithine from L-glutamate: step 2/4. Its function is as follows. Catalyzes the ATP-dependent phosphorylation of N-acetyl-L-glutamate. The polypeptide is Acetylglutamate kinase (Chlorobium limicola (strain DSM 245 / NBRC 103803 / 6330)).